The sequence spans 940 residues: PTS system glucose-specific EIICBA component (940 aa).

One can recognise a PTS EIIC type-1; first part domain in the interval 1–284 (MQIKAQDTGQ…YAPLWYTSAG (284 aa)). A run of 5 helical transmembrane segments spans residues 43–63 (LMIP…GDAI), 83–103 (GGDV…AITF), 112–132 (FSAF…ILPF), 175–195 (VFGG…FYAI), and 209–229 (FVPI…LMIW). A unknown region spans residues 285 to 478 (GSLQEIVNQQ…VNSFRVAVES (194 aa)). Residues 479–630 (LNPAQYSQGK…FNLATPGRGG (152 aa)) form the PTS EIIC type-1; second part domain. 5 helical membrane-spanning segments follow: residues 487-507 (GKFP…ILAA), 515-535 (AASI…TEPF), 537-557 (FTFL…LAAV), 564-584 (ILGA…ILYG), and 598-618 (LVPI…YFLI). One can recognise a PTS EIIB type-1 domain in the interval 661-743 (QIEAGILLQA…QDIIQGKVNW (83 aa)). The Phosphocysteine intermediate; for EIIB activity role is filled by Cys-683. Residues 794–907 (DETFKQKLVG…NPITPFVVMK (114 aa)) enclose the PTS EIIA type-1 domain. His-847 acts as the Tele-phosphohistidine intermediate; for EIIA activity in catalysis.

The protein localises to the cell membrane. It catalyses the reaction N(pros)-phospho-L-histidyl-[protein] + D-glucose(out) = D-glucose 6-phosphate(in) + L-histidyl-[protein]. Functionally, the phosphoenolpyruvate-dependent sugar phosphotransferase system (sugar PTS), a major carbohydrate active transport system, catalyzes the phosphorylation of incoming sugar substrates concomitantly with their translocation across the cell membrane. This system is involved in glucose transport. The chain is PTS system glucose-specific EIICBA component (ptsG) from Mycoplasma pneumoniae (strain ATCC 29342 / M129 / Subtype 1) (Mycoplasmoides pneumoniae).